A 153-amino-acid polypeptide reads, in one-letter code: Inner membrane protein YjiG (153 aa).

The Periplasmic portion of the chain corresponds to 1–31 (MTTQVRKNVMDMFIDGARRGFTIATTNLLPN). The helical transmembrane segment at 32-52 (VVMAFVIIQALKITGLLDWVG) threads the bilayer. At 53–68 (HICEPVMALWGLPGEA) the chain is on the cytoplasmic side. 2 helical membrane passes run 69–89 (ATVLLAALMSMGGAVGVAASL) and 90–110 (ATAGALTGHDVTVLLPAMYLM). Residues 111 to 132 (GNPVQNVGRCLGTAEVNAKYYP) lie on the Cytoplasmic side of the membrane. A helical membrane pass occupies residues 133–153 (HIITVCVINALLSIWVMQLIV).

This sequence belongs to the SpmB family.

Its subcellular location is the cell inner membrane. The polypeptide is Inner membrane protein YjiG (yjiG) (Escherichia coli O157:H7).